Here is a 1433-residue protein sequence, read N- to C-terminus: Gag-Pol polyprotein (1433 aa).

G2 carries the N-myristoyl glycine; by host lipid modification. The interaction with Gp41 stretch occupies residues 7–31; that stretch reads VLTGGKLDAWEKIRLRPGGRKSYKI. Positions 8 to 43 are interaction with host CALM1; the sequence is LTGGKLDAWEKIRLRPGGRKSYKIKHLVWASRELER. Residues 12-19 are interaction with host AP3D1; the sequence is KLDAWEKI. Residues 14 to 33 are interaction with membrane phosphatidylinositol 4,5-bisphosphate and RNA; it reads DAWEKIRLRPGGRKSYKIKH. The Nuclear export signal motif lies at 16-22; the sequence is WEKIRLR. The short motif at 26–32 is the Nuclear localization signal element; that stretch reads RKSYKIK. The interval 73 to 77 is interaction with membrane phosphatidylinositol 4,5-bisphosphate; that stretch reads EEIKS. A Phosphotyrosine; by host modification is found at Y132. Residues 189–227 are interaction with human PPIA/CYPA and NUP153; sequence NTVGGHQAAMQMLKDTINEEAAEWDRMHPQQAGPFPPGQ. Positions 277–363 are dimerization/Multimerization of capsid protein p24; it reads YSPVSILDIR…GGPSHKARVL (87 aa). 2 consecutive CCHC-type zinc fingers follow at residues 391-408 and 412-429; these read IKCF…NCRA and KGCW…DCTE. Basic and acidic residues predominate over residues 445–455; it reads EAREFSSEQDR. The interval 445–481 is disordered; that stretch reads EAREFSSEQDRTNSPTCRKPRVRRGDSPLPEAGDEGK. The segment at 487 to 491 is dimerization of protease; the sequence is PQITL. The 70-residue stretch at 506–575 folds into the Peptidase A2 domain; that stretch reads IEALLDTGAD…TPINIIGRNM (70 aa). The active-site For protease activity; shared with dimeric partner is D511. Dimerization of protease regions lie at residues 535 to 541 and 574 to 586; these read GIGGFIK and NMLT…LNFP. The Reverse transcriptase domain maps to 629-819; the sequence is EGKISKIGPE…PPFLWMGYEL (191 aa). 3 residues coordinate Mg(2+): D695, D770, and D771. The segment at 812 to 820 is RT 'primer grip'; the sequence is FLWMGYELH. A Tryptophan repeat motif motif is present at residues 983-999; that stretch reads WEIWWTDYWQATWIPEW. In terms of domain architecture, RNase H type-1 spans 1019–1142; that stretch reads IPGAETYYVD…VDKLVSSGIR (124 aa). Positions 1028, 1063, 1083, and 1134 each coordinate Mg(2+). Residues 1148 to 1189 form an Integrase-type zinc finger; the sequence is DGIDKAQEEHERYHNNWRAMASDFNLPPIVAKEIVASCDKCQ. Residues H1157, H1161, C1185, and C1188 each contribute to the Zn(2+) site. One can recognise an Integrase catalytic domain in the interval 1199 to 1349; sequence VDCSPGIWQL…SAGERIIDII (151 aa). Mg(2+)-binding residues include D1209, D1261, and E1297. Residues 1368 to 1415 constitute a DNA-binding region (integrase-type); the sequence is FRVYYRDSRDPVWKGPAKLLWKGEGAVVIQDNNEIKVVPRRKAKIIRD.

In terms of assembly, homotrimer; further assembles as hexamers of trimers. Interacts with gp41 (via C-terminus). Interacts with host CALM1; this interaction induces a conformational change in the Matrix protein, triggering exposure of the myristate group. Interacts with host AP3D1; this interaction allows the polyprotein trafficking to multivesicular bodies during virus assembly. Part of the pre-integration complex (PIC) which is composed of viral genome, matrix protein, Vpr and integrase. As to quaternary structure, homodimer; the homodimer further multimerizes as homohexamers or homopentamers. Interacts with human PPIA/CYPA; This interaction stabilizes the capsid. Interacts with human NUP153. Interacts with host PDZD8; this interaction stabilizes the capsid. Interacts with monkey TRIM5; this interaction destabilizes the capsid. Homodimer, whose active site consists of two apposed aspartic acid residues. In terms of assembly, heterodimer of p66 RT and p51 RT (RT p66/p51). Heterodimerization of RT is essential for DNA polymerase activity. The overall folding of the subdomains is similar in p66 RT and p51 RT but the spatial arrangements of the subdomains are dramatically different. As to quaternary structure, homotetramer; may further associate as a homohexadecamer. Part of the pre-integration complex (PIC) which is composed of viral genome, matrix protein, Vpr and integrase. Interacts with human SMARCB1/INI1 and human PSIP1/LEDGF isoform 1. Interacts with human KPNA3; this interaction might play a role in nuclear import of the pre-integration complex. Interacts with human NUP153; this interaction might play a role in nuclear import of the pre-integration complex. Mg(2+) is required as a cofactor. Post-translationally, specific enzymatic cleavages by the viral protease yield mature proteins. The protease is released by autocatalytic cleavage. The polyprotein is cleaved during and after budding, this process is termed maturation. Proteolytic cleavage of p66 RT removes the RNase H domain to yield the p51 RT subunit. Nucleocapsid protein p7 might be further cleaved after virus entry. Tyrosine phosphorylated presumably in the virion by a host kinase. Phosphorylation is apparently not a major regulator of membrane association. In terms of processing, phosphorylated possibly by host MAPK1; this phosphorylation is necessary for Pin1-mediated virion uncoating. Post-translationally, methylated by host PRMT6, impairing its function by reducing RNA annealing and the initiation of reverse transcription.

It localises to the host cell membrane. It is found in the host endosome. Its subcellular location is the host multivesicular body. The protein resides in the virion membrane. The protein localises to the host nucleus. It localises to the host cytoplasm. It is found in the virion. The catalysed reaction is Specific for a P1 residue that is hydrophobic, and P1' variable, but often Pro.. It carries out the reaction Endohydrolysis of RNA in RNA/DNA hybrids. Three different cleavage modes: 1. sequence-specific internal cleavage of RNA. Human immunodeficiency virus type 1 and Moloney murine leukemia virus enzymes prefer to cleave the RNA strand one nucleotide away from the RNA-DNA junction. 2. RNA 5'-end directed cleavage 13-19 nucleotides from the RNA end. 3. DNA 3'-end directed cleavage 15-20 nucleotides away from the primer terminus.. The enzyme catalyses 3'-end directed exonucleolytic cleavage of viral RNA-DNA hybrid.. It catalyses the reaction DNA(n) + a 2'-deoxyribonucleoside 5'-triphosphate = DNA(n+1) + diphosphate. Protease: The viral protease is inhibited by many synthetic protease inhibitors (PIs), such as amprenavir, atazanavir, indinavir, loprinavir, nelfinavir, ritonavir and saquinavir. Use of protease inhibitors in tritherapy regimens permit more ambitious therapeutic strategies. Reverse transcriptase/ribonuclease H: RT can be inhibited either by nucleoside RT inhibitors (NRTIs) or by non nucleoside RT inhibitors (NNRTIs). NRTIs act as chain terminators, whereas NNRTIs inhibit DNA polymerization by binding a small hydrophobic pocket near the RT active site and inducing an allosteric change in this region. Classical NRTIs are abacavir, adefovir (PMEA), didanosine (ddI), lamivudine (3TC), stavudine (d4T), tenofovir (PMPA), zalcitabine (ddC), and zidovudine (AZT). Classical NNRTIs are atevirdine (BHAP U-87201E), delavirdine, efavirenz (DMP-266), emivirine (I-EBU), and nevirapine (BI-RG-587). The tritherapies used as a basic effective treatment of AIDS associate two NRTIs and one NNRTI. Functionally, mediates, with Gag polyprotein, the essential events in virion assembly, including binding the plasma membrane, making the protein-protein interactions necessary to create spherical particles, recruiting the viral Env proteins, and packaging the genomic RNA via direct interactions with the RNA packaging sequence (Psi). Gag-Pol polyprotein may regulate its own translation, by the binding genomic RNA in the 5'-UTR. At low concentration, the polyprotein would promote translation, whereas at high concentration, the polyprotein would encapsidate genomic RNA and then shut off translation. Targets the polyprotein to the plasma membrane via a multipartite membrane-binding signal, that includes its myristoylated N-terminus. Matrix protein is part of the pre-integration complex. Implicated in the release from host cell mediated by Vpu. Binds to RNA. In terms of biological role, forms the conical core that encapsulates the genomic RNA-nucleocapsid complex in the virion. Most core are conical, with only 7% tubular. The core is constituted by capsid protein hexamer subunits. The core is disassembled soon after virion entry. Host restriction factors such as TRIM5-alpha or TRIMCyp bind retroviral capsids and cause premature capsid disassembly, leading to blocks in reverse transcription. Capsid restriction by TRIM5 is one of the factors which restricts HIV-1 to the human species. Host PIN1 apparently facilitates the virion uncoating. On the other hand, interactions with PDZD8 or CYPA stabilize the capsid. Its function is as follows. Encapsulates and protects viral dimeric unspliced genomic RNA (gRNA). Binds these RNAs through its zinc fingers. Acts as a nucleic acid chaperone which is involved in rearangement of nucleic acid secondary structure during gRNA retrotranscription. Also facilitates template switch leading to recombination. As part of the polyprotein, participates in gRNA dimerization, packaging, tRNA incorporation and virion assembly. Functionally, aspartyl protease that mediates proteolytic cleavages of Gag and Gag-Pol polyproteins during or shortly after the release of the virion from the plasma membrane. Cleavages take place as an ordered, step-wise cascade to yield mature proteins. This process is called maturation. Displays maximal activity during the budding process just prior to particle release from the cell. Also cleaves Nef and Vif, probably concomitantly with viral structural proteins on maturation of virus particles. Hydrolyzes host EIF4GI and PABP1 in order to shut off the capped cellular mRNA translation. The resulting inhibition of cellular protein synthesis serves to ensure maximal viral gene expression and to evade host immune response. Also mediates cleavage of host YTHDF3. Mediates cleavage of host CARD8, thereby activating the CARD8 inflammasome, leading to the clearance of latent HIV-1 in patient CD4(+) T-cells after viral reactivation; in contrast, HIV-1 can evade CARD8-sensing when its protease remains inactive in infected cells prior to viral budding. Multifunctional enzyme that converts the viral RNA genome into dsDNA in the cytoplasm, shortly after virus entry into the cell. This enzyme displays a DNA polymerase activity that can copy either DNA or RNA templates, and a ribonuclease H (RNase H) activity that cleaves the RNA strand of RNA-DNA heteroduplexes in a partially processive 3' to 5' endonucleasic mode. Conversion of viral genomic RNA into dsDNA requires many steps. A tRNA(3)-Lys binds to the primer-binding site (PBS) situated at the 5'-end of the viral RNA. RT uses the 3' end of the tRNA primer to perform a short round of RNA-dependent minus-strand DNA synthesis. The reading proceeds through the U5 region and ends after the repeated (R) region which is present at both ends of viral RNA. The portion of the RNA-DNA heteroduplex is digested by the RNase H, resulting in a ssDNA product attached to the tRNA primer. This ssDNA/tRNA hybridizes with the identical R region situated at the 3' end of viral RNA. This template exchange, known as minus-strand DNA strong stop transfer, can be either intra- or intermolecular. RT uses the 3' end of this newly synthesized short ssDNA to perform the RNA-dependent minus-strand DNA synthesis of the whole template. RNase H digests the RNA template except for two polypurine tracts (PPTs) situated at the 5'-end and near the center of the genome. It is not clear if both polymerase and RNase H activities are simultaneous. RNase H probably can proceed both in a polymerase-dependent (RNA cut into small fragments by the same RT performing DNA synthesis) and a polymerase-independent mode (cleavage of remaining RNA fragments by free RTs). Secondly, RT performs DNA-directed plus-strand DNA synthesis using the PPTs that have not been removed by RNase H as primers. PPTs and tRNA primers are then removed by RNase H. The 3' and 5' ssDNA PBS regions hybridize to form a circular dsDNA intermediate. Strand displacement synthesis by RT to the PBS and PPT ends produces a blunt ended, linear dsDNA copy of the viral genome that includes long terminal repeats (LTRs) at both ends. In terms of biological role, catalyzes viral DNA integration into the host chromosome, by performing a series of DNA cutting and joining reactions. This enzyme activity takes place after virion entry into a cell and reverse transcription of the RNA genome in dsDNA. The first step in the integration process is 3' processing. This step requires a complex comprising the viral genome, matrix protein, Vpr and integrase. This complex is called the pre-integration complex (PIC). The integrase protein removes 2 nucleotides from each 3' end of the viral DNA, leaving recessed CA OH's at the 3' ends. In the second step, the PIC enters cell nucleus. This process is mediated through integrase and Vpr proteins, and allows the virus to infect a non dividing cell. This ability to enter the nucleus is specific of lentiviruses, other retroviruses cannot and rely on cell division to access cell chromosomes. In the third step, termed strand transfer, the integrase protein joins the previously processed 3' ends to the 5' ends of strands of target cellular DNA at the site of integration. The 5'-ends are produced by integrase-catalyzed staggered cuts, 5 bp apart. A Y-shaped, gapped, recombination intermediate results, with the 5'-ends of the viral DNA strands and the 3' ends of target DNA strands remaining unjoined, flanking a gap of 5 bp. The last step is viral DNA integration into host chromosome. This involves host DNA repair synthesis in which the 5 bp gaps between the unjoined strands are filled in and then ligated. Since this process occurs at both cuts flanking the HIV genome, a 5 bp duplication of host DNA is produced at the ends of HIV-1 integration. Alternatively, Integrase may catalyze the excision of viral DNA just after strand transfer, this is termed disintegration. This Human immunodeficiency virus type 1 group M subtype G (isolate SE6165) (HIV-1) protein is Gag-Pol polyprotein (gag-pol).